A 139-amino-acid polypeptide reads, in one-letter code: Transcription antitermination protein NusB (139 aa).

Belongs to the NusB family.

Involved in transcription antitermination. Required for transcription of ribosomal RNA (rRNA) genes. Binds specifically to the boxA antiterminator sequence of the ribosomal RNA (rrn) operons. This chain is Transcription antitermination protein NusB, found in Edwardsiella ictaluri (strain 93-146).